Consider the following 239-residue polypeptide: Exosome complex component Rrp4 (239 aa).

In terms of domain architecture, S1 motif spans 67–139 (GDFVVGIVEE…PVQRVELSLL (73 aa)). The region spanning 151-217 (QGGQVVEIDP…LAVRAIREIE (67 aa)) is the KH domain.

Belongs to the RRP4 family. In terms of assembly, component of the archaeal exosome complex. Forms a trimer of Rrp4 and/or Csl4 subunits. The trimer associates with a hexameric ring-like arrangement composed of 3 Rrp41-Rrp42 heterodimers.

It is found in the cytoplasm. Non-catalytic component of the exosome, which is a complex involved in RNA degradation. Increases the RNA binding and the efficiency of RNA degradation. Confers strong poly(A) specificity to the exosome. In Methanopyrus kandleri (strain AV19 / DSM 6324 / JCM 9639 / NBRC 100938), this protein is Exosome complex component Rrp4.